The chain runs to 249 residues: Probable GDP-mannose transporter 2 (249 aa).

Topologically, residues 1–15 are lumenal; the sequence is MIYTSSKSLQYLAVP. Residues 16–36 form a helical membrane-spanning segment; the sequence is IYTIFKNLTIILIAYGEVLFF. Residues 37–47 lie on the Cytoplasmic side of the membrane; sequence GGKVTSMELTS. A helical membrane pass occupies residues 48–68; it reads FIMMVLSSVVATWGDQQAIAI. The Lumenal portion of the chain corresponds to 69–84; the sequence is KASSLEDLDQELVEST. The helical transmembrane segment at 85 to 105 threads the bilayer; that stretch reads IFVLNPGYLWMFTNCISSALF. The Cytoplasmic portion of the chain corresponds to 106–122; it reads VLIMRKRIRLTNFKDYD. A helical membrane pass occupies residues 123–143; sequence TMFYNNVLALPLLLVFSFIME. The Lumenal segment spans residues 144 to 159; the sequence is DWSTKNLSVNLSADSL. N-linked (GlcNAc...) asparagine glycans are attached at residues Asn149 and Asn153. A helical transmembrane segment spans residues 160-180; it reads AAMVISGLMSVGISYCSGWCV. Residues 181 to 186 are Cytoplasmic-facing; sequence RVTSST. The helical transmembrane segment at 187–207 threads the bilayer; that stretch reads TYSMVGALNKLPIALAGLVFF. Residues 208-211 lie on the Lumenal side of the membrane; the sequence is DAPK. A helical transmembrane segment spans residues 212 to 232; it reads NFLSFFSIFLGFLSGLLYAVA. Residues 233–249 are Cytoplasmic-facing; the sequence is KQKKIQQQKVLAATLEK.

The protein belongs to the TPT transporter family. SLC35D subfamily.

The protein resides in the golgi apparatus membrane. It localises to the cytoplasmic vesicle membrane. The protein localises to the endoplasmic reticulum membrane. Functionally, involved in the import of GDP-mannose from the cytoplasm into the Golgi lumen. In Saccharomyces cerevisiae (strain RM11-1a) (Baker's yeast), this protein is Probable GDP-mannose transporter 2 (HVG1).